The following is a 505-amino-acid chain: Trans-cinnamate 4-monooxygenase (505 aa).

The chain crosses the membrane as a helical span at residues L3 to V23. (E)-cinnamate-binding positions include R213–Q218 and A306. C447 lines the heme pocket.

The protein belongs to the cytochrome P450 family. Heme serves as cofactor.

The protein resides in the membrane. It catalyses the reaction (E)-cinnamate + reduced [NADPH--hemoprotein reductase] + O2 = (E)-4-coumarate + oxidized [NADPH--hemoprotein reductase] + H2O + H(+). The protein operates within phenylpropanoid metabolism; trans-4-coumarate biosynthesis; trans-4-coumarate from trans-cinnamate: step 1/1. Functionally, catalyzes the first oxidative step of the phenylpropanoid pathway in higher plants by transforming trans-cinnamate into p-coumarate. The compounds formed by this pathway are essential components for lignification, pollination, and defense against ultraviolet light, predators and pathogens. This is Trans-cinnamate 4-monooxygenase (CYP73A4) from Catharanthus roseus (Madagascar periwinkle).